A 763-amino-acid polypeptide reads, in one-letter code: MSELLSVALFLASVLIYAWKAGRNTWWFAATLTVLGLFVILNITLYASDYFTGDGINDAVLYTLTNSLTGAGVGKYILPGIGIALALVAVFGALGWVLRRRRHHPHHVGYSLLALLLALGSVDASPAFRQITELVKSQMRDGDPDFAVYYKEPAKTIPNPKLNLVYIYGESLERTYFDNDAFPNLTPELGALKNEGLDFSHTMQLPGTDYTIAGMVASQCGIPLFAPFEGNASASVSSFFPQNICLGDILKNSGYQNYFVQGANLRFAGKDVFLKSHGFDHLYGAEELKTVVADPSYRNDWGFYDDTVLDEAWKKFEALSRSGQRFSLFTLTVDTHHPDGFISRTCNRKRYDYDGKPNQSFSAVSCSQENIAEFINKIKASPWFKDTVIVVSSDHLAMNNTAWKYLNKQDRNNLFFILRGDKPQQETLAVKRNTMDNGATVLDILGGDNFIGLGRSSLSGQSLSEVFLNVKEKVLAMKPDIIRLWNFPKEIKDFTVDRDKNMIAFSGSHFRLPLLLRVSDKRVEPLPESEYSAPLRFQLADFAPRDNFVWIDRCYKMAQLWAPALALSTDWCVSQGQLGGQQTVQHVDKAQWQGKTAFKDTMIDMERYKGNVDTLKIVDNDIRYKADSFIFNVAGAPEEVKQFSGISRPESWGRWSNAQLGDEVKIEYKAPLPKKFDLVITAKAFGDNANRPIPVRVGNEEQTLVLGHDVSTITLHFNNPTDANTLVIAPPAPVSTNEGNILGHSPRKLGIGMVEIKVVNVES.

The next 4 membrane-spanning stretches (helical) occupy residues 1-21 (MSELLSVALFLASVLIYAWKA), 26-46 (WWFAATLTVLGLFVILNITLY), 77-97 (ILPGIGIALALVAVFGALGWV), and 108-128 (VGYSLLALLLALGSVDASPAF).

The protein belongs to the OpgB family.

The protein resides in the cell inner membrane. It carries out the reaction a phosphatidylglycerol + a membrane-derived-oligosaccharide D-glucose = a 1,2-diacyl-sn-glycerol + a membrane-derived-oligosaccharide 6-(glycerophospho)-D-glucose.. The protein operates within glycan metabolism; osmoregulated periplasmic glucan (OPG) biosynthesis. In terms of biological role, transfers a phosphoglycerol residue from phosphatidylglycerol to the membrane-bound nascent glucan backbones. The protein is Phosphoglycerol transferase I of Salmonella heidelberg (strain SL476).